Consider the following 258-residue polypeptide: Imidazole glycerol phosphate synthase subunit HisF (258 aa).

Active-site residues include Asp-11 and Asp-130.

This sequence belongs to the HisA/HisF family. As to quaternary structure, heterodimer of HisH and HisF.

It localises to the cytoplasm. The enzyme catalyses 5-[(5-phospho-1-deoxy-D-ribulos-1-ylimino)methylamino]-1-(5-phospho-beta-D-ribosyl)imidazole-4-carboxamide + L-glutamine = D-erythro-1-(imidazol-4-yl)glycerol 3-phosphate + 5-amino-1-(5-phospho-beta-D-ribosyl)imidazole-4-carboxamide + L-glutamate + H(+). It participates in amino-acid biosynthesis; L-histidine biosynthesis; L-histidine from 5-phospho-alpha-D-ribose 1-diphosphate: step 5/9. Its function is as follows. IGPS catalyzes the conversion of PRFAR and glutamine to IGP, AICAR and glutamate. The HisF subunit catalyzes the cyclization activity that produces IGP and AICAR from PRFAR using the ammonia provided by the HisH subunit. This chain is Imidazole glycerol phosphate synthase subunit HisF, found in Shigella boydii serotype 18 (strain CDC 3083-94 / BS512).